A 349-amino-acid chain; its full sequence is Phosphoribosylformylglycinamidine cyclo-ligase (349 aa).

Belongs to the AIR synthase family.

It localises to the cytoplasm. It carries out the reaction 2-formamido-N(1)-(5-O-phospho-beta-D-ribosyl)acetamidine + ATP = 5-amino-1-(5-phospho-beta-D-ribosyl)imidazole + ADP + phosphate + H(+). Its pathway is purine metabolism; IMP biosynthesis via de novo pathway; 5-amino-1-(5-phospho-D-ribosyl)imidazole from N(2)-formyl-N(1)-(5-phospho-D-ribosyl)glycinamide: step 2/2. This is Phosphoribosylformylglycinamidine cyclo-ligase from Bordetella petrii (strain ATCC BAA-461 / DSM 12804 / CCUG 43448).